A 305-amino-acid chain; its full sequence is NAD-dependent protein deacylase sirtuin-5, mitochondrial (305 aa).

The N-terminal 32 residues, 1-32 (MIVRQLWCSRGSTSHLCAAVRLNWRSPKMTRP), are a transit peptide targeting the mitochondrion. The 271-residue stretch at 33–303 (SSDLTAFREH…PPALERHESE (271 aa)) folds into the Deacetylase sirtuin-type domain. 54–73 (GAGVSAESGVPTFRGPGGFW) provides a ligand contact to NAD(+). Residues Tyr98 and Arg101 each contribute to the substrate site. Position 136-139 (136-139 (QNID)) interacts with NAD(+). The active-site Proton acceptor is His154. Cys162, Cys165, Cys203, and Cys208 together coordinate Zn(2+). Residues 245–247 (GTS), 271–273 (NME), and Cys289 each bind NAD(+).

Belongs to the sirtuin family. Class III subfamily. Zn(2+) serves as cofactor.

The protein localises to the mitochondrion. It localises to the cytoplasm. Its subcellular location is the cytosol. It is found in the nucleus. It carries out the reaction N(6)-malonyl-L-lysyl-[protein] + NAD(+) + H2O = 2''-O-malonyl-ADP-D-ribose + nicotinamide + L-lysyl-[protein]. The catalysed reaction is N(6)-succinyl-L-lysyl-[protein] + NAD(+) + H2O = 2''-O-succinyl-ADP-D-ribose + nicotinamide + L-lysyl-[protein]. It catalyses the reaction N(6)-glutaryl-L-lysyl-[protein] + NAD(+) + H2O = 2''-O-glutaryl-ADP-D-ribose + nicotinamide + L-lysyl-[protein]. NAD-dependent lysine demalonylase, desuccinylase and deglutarylase that specifically removes malonyl, succinyl and glutaryl groups on target proteins. Has weak NAD-dependent protein deacetylase activity; however this activity may not be physiologically relevant in vivo. This is NAD-dependent protein deacylase sirtuin-5, mitochondrial (sirt5) from Danio rerio (Zebrafish).